The following is a 734-amino-acid chain: Photosystem I P700 chlorophyll a apoprotein A2 (734 aa).

The next 8 membrane-spanning stretches (helical) occupy residues 46–69 (IFAS…FHVA), 135–158 (LYAG…LHLQ), 175–199 (LNHH…HVAI), 273–291 (MAHH…GHMY), 330–353 (LHFQ…QHMY), 369–395 (AALY…IFLI), 417–439 (AIIS…LYVH), and 517–535 (FLVH…LILV). Positions 559 and 568 each coordinate [4Fe-4S] cluster. The next 2 membrane-spanning stretches (helical) occupy residues 575-596 (AFYL…YWHW) and 643-665 (LSVW…MFLI). Positions 654, 662, and 670 each coordinate chlorophyll a. Trp671 serves as a coordination point for phylloquinone. The chain crosses the membrane as a helical span at residues 707–727 (LVGLAHFSVGYIFTYAAFLIA).

The protein belongs to the PsaA/PsaB family. As to quaternary structure, the PsaA/B heterodimer binds the P700 chlorophyll special pair and subsequent electron acceptors. PSI consists of a core antenna complex that captures photons, and an electron transfer chain that converts photonic excitation into a charge separation. The eukaryotic PSI reaction center is composed of at least 11 subunits. Requires P700 is a chlorophyll a/chlorophyll a' dimer, A0 is one or more chlorophyll a, A1 is one or both phylloquinones and FX is a shared 4Fe-4S iron-sulfur center. as cofactor.

Its subcellular location is the plastid. The protein localises to the chloroplast thylakoid membrane. It carries out the reaction reduced [plastocyanin] + hnu + oxidized [2Fe-2S]-[ferredoxin] = oxidized [plastocyanin] + reduced [2Fe-2S]-[ferredoxin]. PsaA and PsaB bind P700, the primary electron donor of photosystem I (PSI), as well as the electron acceptors A0, A1 and FX. PSI is a plastocyanin-ferredoxin oxidoreductase, converting photonic excitation into a charge separation, which transfers an electron from the donor P700 chlorophyll pair to the spectroscopically characterized acceptors A0, A1, FX, FA and FB in turn. Oxidized P700 is reduced on the lumenal side of the thylakoid membrane by plastocyanin. This Pinus thunbergii (Japanese black pine) protein is Photosystem I P700 chlorophyll a apoprotein A2.